The chain runs to 780 residues: ATP-dependent 6-phosphofructokinase, muscle type (780 aa).

Residue Thr2 is modified to N-acetylthreonine. Positions 2–390 (THEEHHAAKS…NWEVYKLLAH (389 aa)) are N-terminal catalytic PFK domain 1. Residues Gly25, 88 to 89 (RC), and 118 to 121 (GDGS) contribute to the ATP site. Asp119 serves as a coordination point for Mg(2+). Substrate-binding positions include 164–166 (SID), Arg201, 208–210 (MGR), Glu264, Arg292, and 298–301 (HVQR). Residue Asp166 is the Proton acceptor of the active site. Residue Ser377 is modified to Phosphoserine. The tract at residues 391-401 (VRPPVTKSGSY) is interdomain linker. Residues 402–780 (TVAVMNVGAP…TRKRSGEATI (379 aa)) form a C-terminal regulatory PFK domain 2 region. Beta-D-fructose 2,6-bisphosphate contacts are provided by residues Arg471 and 528–532 (TVSNN). O-linked (GlcNAc) serine glycosylation occurs at Ser530. Position 557 is an N6-(2-hydroxyisobutyryl)lysine (Lys557). Residues Arg566, 573–575 (MGG), Glu629, Arg655, and 661–664 (HMQQ) each bind beta-D-fructose 2,6-bisphosphate. The residue at position 667 (Ser667) is a Phosphoserine. A beta-D-fructose 2,6-bisphosphate-binding site is contributed by Arg735. Position 775 is a phosphoserine (Ser775).

Belongs to the phosphofructokinase type A (PFKA) family. ATP-dependent PFK group I subfamily. Eukaryotic two domain clade 'E' sub-subfamily. As to quaternary structure, homo- and heterotetramers. Phosphofructokinase (PFK) enzyme functions as a tetramer composed of different combinations of 3 types of subunits, called PFKM (M), PFKL (L) and PFKP (P). The composition of the PFK tetramer differs according to the tissue type it is present in. The kinetic and regulatory properties of the tetrameric enzyme are dependent on the subunit composition, hence can vary across tissues. Interacts (via C-terminus) with HK1 (via N-terminal spermatogenic cell-specific region). Mg(2+) serves as cofactor. Post-translationally, glcNAcylation decreases enzyme activity.

It is found in the cytoplasm. It catalyses the reaction beta-D-fructose 6-phosphate + ATP = beta-D-fructose 1,6-bisphosphate + ADP + H(+). The protein operates within carbohydrate degradation; glycolysis; D-glyceraldehyde 3-phosphate and glycerone phosphate from D-glucose: step 3/4. Allosterically activated by ADP, AMP, or fructose 2,6-bisphosphate, and allosterically inhibited by ATP or citrate. Catalyzes the phosphorylation of D-fructose 6-phosphate to fructose 1,6-bisphosphate by ATP, the first committing step of glycolysis. The polypeptide is ATP-dependent 6-phosphofructokinase, muscle type (PFKM) (Sus scrofa (Pig)).